A 262-amino-acid chain; its full sequence is Snake venom serine protease catroxase-1 (262 aa).

Residues 1 to 18 (MVLIRVLANLLILQLSYA) form the signal peptide. A propeptide spanning residues 19–24 (QKSSEP) is cleaved from the precursor. The 226-residue stretch at 25–250 (IIGGDECNRN…HLDWIQSIIA (226 aa)) folds into the Peptidase S1 domain. 6 disulfides stabilise this stretch: C31-C162, C49-C65, C97-C257, C141-C211, C173-C190, and C201-C226. Catalysis depends on H64, which acts as the Charge relay system. N102 is a glycosylation site (N-linked (GlcNAc...) asparagine). The Charge relay system role is filled by D109. Residue N169 is glycosylated (N-linked (GlcNAc...) asparagine). S205 functions as the Charge relay system in the catalytic mechanism.

The protein belongs to the peptidase S1 family. Snake venom subfamily. As to quaternary structure, monomer. As to expression, expressed by the venom gland.

The protein resides in the secreted. Functionally, snake venom serine protease that may act in the hemostasis system of the prey. The polypeptide is Snake venom serine protease catroxase-1 (Crotalus atrox (Western diamondback rattlesnake)).